The sequence spans 102 residues: Protein Tat (102 aa).

The span at 1 to 10 shows a compositional bias: basic and acidic residues; the sequence is MEPVDPRLEP. A disordered region spans residues 1–20; sequence MEPVDPRLEPWNHPGSQPKT. The tract at residues 1–24 is interaction with human CREBBP; the sequence is MEPVDPRLEPWNHPGSQPKTACNK. Positions 1 to 48 are transactivation; sequence MEPVDPRLEPWNHPGSQPKTACNKCYCKKCCYHCMCCFTKKGLGISYG. Zn(2+) contacts are provided by C22, C25, and C27. The cysteine-rich stretch occupies residues 22–37; the sequence is CNKCYCKKCCYHCMCC. K28 is subject to N6-acetyllysine; by host PCAF. Zn(2+) is bound by residues C30, H33, C34, and C37. Residues 38-48 are core; the sequence is FTKKGLGISYG. Residues 47–102 are disordered; it reads YGRKKRSQRRRPPKSSKDHQDPIPEQPLSRQQPGDQTGQKKQKKALEGKTEADPCD. Basic residues predominate over residues 48–60; it reads GRKKRSQRRRPPK. Residues 49 to 57 carry the Nuclear localization signal, RNA-binding (TAR), and protein transduction motif; it reads RKKRSQRRR. Residues 49–87 are interaction with the host capping enzyme RNGTT; it reads RKKRSQRRRPPKSSKDHQDPIPEQPLSRQQPGDQTGQKK. Residues K50 and K51 each carry the N6-acetyllysine; by host EP300 and GCN5L2 modification. An Asymmetric dimethylarginine; by host PRMT6 modification is found at R52. The segment covering 74-85 has biased composition (polar residues); sequence LSRQQPGDQTGQ. The span at 90–102 shows a compositional bias: basic and acidic residues; that stretch reads KALEGKTEADPCD.

It belongs to the lentiviruses Tat family. Interacts with host CCNT1. Associates with the P-TEFb complex composed at least of Tat, P-TEFb (CDK9 and CCNT1), TAR RNA, RNA Pol II. Recruits the HATs CREBBP, TAF1/TFIID, EP300, PCAF and GCN5L2. Interacts with host KAT5/Tip60; this interaction targets the latter to degradation. Interacts with the host deacetylase SIRT1. Interacts with host capping enzyme RNGTT; this interaction stimulates RNGTT. Binds to host KDR, and to the host integrins ITGAV/ITGB3 and ITGA5/ITGB1. Interacts with host KPNB1/importin beta-1 without previous binding to KPNA1/importin alpha-1. Interacts with EIF2AK2. Interacts with host nucleosome assembly protein NAP1L1; this interaction may be required for the transport of Tat within the nucleus, since the two proteins interact at the nuclear rim. Interacts with host C1QBP/SF2P32; this interaction involves lysine-acetylated Tat. Interacts with the host chemokine receptors CCR2, CCR3 and CXCR4. Interacts with host DPP4/CD26; this interaction may trigger an anti-proliferative effect. Interacts with host LDLR. Interacts with the host extracellular matrix metalloproteinase MMP1. Interacts with host PRMT6; this interaction mediates Tat's methylation. Interacts with, and is ubiquitinated by MDM2/Hdm2. Interacts with host PSMC3 and HTATIP2. Interacts with STAB1; this interaction may overcome SATB1-mediated repression of IL2 and IL2RA (interleukin) in T cells by binding to the same domain than HDAC1. Interacts (when acetylated) with human CDK13, thereby increasing HIV-1 mRNA splicing and promoting the production of the doubly spliced HIV-1 protein Nef. Interacts with host TBP; this interaction modulates the activity of transcriptional pre-initiation complex. Interacts with host RELA. Interacts with host PLSCR1; this interaction negatively regulates Tat transactivation activity by altering its subcellular distribution. Post-translationally, asymmetrical arginine methylation by host PRMT6 seems to diminish the transactivation capacity of Tat and affects the interaction with host CCNT1. In terms of processing, acetylation by EP300, CREBBP, GCN5L2/GCN5 and PCAF regulates the transactivation activity of Tat. EP300-mediated acetylation of Lys-50 promotes dissociation of Tat from the TAR RNA through the competitive binding to PCAF's bromodomain. In addition, the non-acetylated Tat's N-terminus can also interact with PCAF. PCAF-mediated acetylation of Lys-28 enhances Tat's binding to CCNT1. Lys-50 is deacetylated by SIRT1. Polyubiquitination by host MDM2 does not target Tat to degradation, but activates its transactivation function and fosters interaction with CCNT1 and TAR RNA. Post-translationally, phosphorylated by EIF2AK2 on serine and threonine residues adjacent to the basic region important for TAR RNA binding and function. Phosphorylation of Tat by EIF2AK2 is dependent on the prior activation of EIF2AK2 by dsRNA.

The protein localises to the host nucleus. Its subcellular location is the host nucleolus. It is found in the host cytoplasm. The protein resides in the secreted. Functionally, transcriptional activator that increases RNA Pol II processivity, thereby increasing the level of full-length viral transcripts. Recognizes a hairpin structure at the 5'-LTR of the nascent viral mRNAs referred to as the transactivation responsive RNA element (TAR) and recruits the cyclin T1-CDK9 complex (P-TEFb complex) that will in turn hyperphosphorylate the RNA polymerase II to allow efficient elongation. The CDK9 component of P-TEFb and other Tat-activated kinases hyperphosphorylate the C-terminus of RNA Pol II that becomes stabilized and much more processive. Other factors such as HTATSF1/Tat-SF1, SUPT5H/SPT5, and HTATIP2 are also important for Tat's function. Besides its effect on RNA Pol II processivity, Tat induces chromatin remodeling of proviral genes by recruiting the histone acetyltransferases (HATs) CREBBP, EP300 and PCAF to the chromatin. This also contributes to the increase in proviral transcription rate, especially when the provirus integrates in transcriptionally silent region of the host genome. To ensure maximal activation of the LTR, Tat mediates nuclear translocation of NF-kappa-B by interacting with host RELA. Through its interaction with host TBP, Tat may also modulate transcription initiation. Tat can reactivate a latently infected cell by penetrating in it and transactivating its LTR promoter. In the cytoplasm, Tat is thought to act as a translational activator of HIV-1 mRNAs. Its function is as follows. Extracellular circulating Tat can be endocytosed by surrounding uninfected cells via the binding to several surface receptors such as CD26, CXCR4, heparan sulfate proteoglycans (HSPG) or LDLR. Neurons are rarely infected, but they internalize Tat via their LDLR. Through its interaction with nuclear HATs, Tat is potentially able to control the acetylation-dependent cellular gene expression. Modulates the expression of many cellular genes involved in cell survival, proliferation or in coding for cytokines or cytokine receptors. Tat plays a role in T-cell and neurons apoptosis. Tat induced neurotoxicity and apoptosis probably contribute to neuroAIDS. Circulating Tat also acts as a chemokine-like and/or growth factor-like molecule that binds to specific receptors on the surface of the cells, affecting many cellular pathways. In the vascular system, Tat binds to ITGAV/ITGB3 and ITGA5/ITGB1 integrins dimers at the surface of endothelial cells and competes with bFGF for heparin-binding sites, leading to an excess of soluble bFGF. This chain is Protein Tat, found in Human immunodeficiency virus type 1 group N (isolate YBF106) (HIV-1).